We begin with the raw amino-acid sequence, 328 residues long: Ubiquitin carboxyl-terminal hydrolase isozyme L5 (328 aa).

Residues 7–225 (EWCLMESDPG…IRFNLMAIVS (219 aa)) form the UCH catalytic domain. An N6-succinyllysine modification is found at K47. The active-site Nucleophile is C88. At K158 the chain carries N6-acetyllysine. H164 (proton donor) is an active-site residue. At K288 the chain carries N6-succinyllysine. The ULD domain occupies 290–318 (NYLPFIMELLKTLAEHQQLIPLVEKAKEK). The tract at residues 312-328 (VEKAKEKQNAKKAQETK) is interaction with ADRM1.

Belongs to the peptidase C12 family. As to quaternary structure, component of the 19S (PA700) regulatory complex of the 26S proteasome. Interacts with ADRM1 and NFRKB. Component of the INO80 complex; specifically part of a complex module associated with N-terminus of INO80.

The protein localises to the cytoplasm. The protein resides in the nucleus. The enzyme catalyses Thiol-dependent hydrolysis of ester, thioester, amide, peptide and isopeptide bonds formed by the C-terminal Gly of ubiquitin (a 76-residue protein attached to proteins as an intracellular targeting signal).. With respect to regulation, activated by ADRM1. Inhibited by interaction with NFRKB. Functionally, protease that specifically cleaves 'Lys-48'-linked polyubiquitin chains. Deubiquitinating enzyme associated with the 19S regulatory subunit of the 26S proteasome. Putative regulatory component of the INO80 complex; however is inactive in the INO80 complex and is activated by a transient interaction of the INO80 complex with the proteasome via ADRM1. This is Ubiquitin carboxyl-terminal hydrolase isozyme L5 (UCHL5) from Bos taurus (Bovine).